The primary structure comprises 492 residues: Osmoregulated proline transporter OpuE (492 aa).

13 consecutive transmembrane segments (helical) span residues 3–23, 40–60, 62–82, 125–145, 161–181, 190–210, 224–244, 271–291, 314–334, 365–385, 394–414, 424–444, and 449–469; these read IEII…GWYA, LGPF…WMLM, VPGA…GLTI, IVSA…GMVS, GLFL…FLAV, AIMF…VGGV, LLDI…AWGL, IGMS…LIGV, ILFH…AIMS, LVMI…LLSL, LVGY…LLSL, ALAA…TGLA, and VYEI…VSMI.

The protein belongs to the sodium:solute symporter (SSF) (TC 2.A.21) family.

Its subcellular location is the cell membrane. It carries out the reaction L-proline(in) + Na(+)(in) = L-proline(out) + Na(+)(out). Catalyzes the uptake of extracellular proline under high-osmolarity growth conditions. Essential for the use of proline present in the environment as an osmoprotectant. The sequence is that of Osmoregulated proline transporter OpuE from Bacillus subtilis (strain 168).